The chain runs to 201 residues: uncharacterized protein (201 aa).

Positions 121–141 (HHRTRPGRGPGPRPGGSAMAG) are disordered.

This is an uncharacterized protein from Mycobacterium tuberculosis (strain ATCC 25618 / H37Rv).